We begin with the raw amino-acid sequence, 278 residues long: Putative transposase for insertion sequence element IS986/IS6110 (278 aa).

One can recognise an Integrase catalytic domain in the interval 101 to 268 (GPPAPNRLWV…VPPVELEAAY (168 aa)).

Involved in the transposition of the insertion sequence. This chain is Putative transposase for insertion sequence element IS986/IS6110, found in Mycobacterium tuberculosis (strain CDC 1551 / Oshkosh).